The primary structure comprises 139 residues: Transcription antitermination protein NusB (139 aa).

The protein belongs to the NusB family.

Its function is as follows. Involved in transcription antitermination. Required for transcription of ribosomal RNA (rRNA) genes. Binds specifically to the boxA antiterminator sequence of the ribosomal RNA (rrn) operons. In Klebsiella pneumoniae (strain 342), this protein is Transcription antitermination protein NusB.